Reading from the N-terminus, the 484-residue chain is Protein nucleotidyltransferase YdiU (484 aa).

Residues G81, G83, R84, K103, D115, G116, R166, and R173 each coordinate ATP. D244 serves as the catalytic Proton acceptor. N245 and D254 together coordinate Mg(2+). D254 is an ATP binding site.

The protein belongs to the SELO family. Mg(2+) is required as a cofactor. Mn(2+) serves as cofactor.

The catalysed reaction is L-seryl-[protein] + ATP = 3-O-(5'-adenylyl)-L-seryl-[protein] + diphosphate. It catalyses the reaction L-threonyl-[protein] + ATP = 3-O-(5'-adenylyl)-L-threonyl-[protein] + diphosphate. It carries out the reaction L-tyrosyl-[protein] + ATP = O-(5'-adenylyl)-L-tyrosyl-[protein] + diphosphate. The enzyme catalyses L-histidyl-[protein] + UTP = N(tele)-(5'-uridylyl)-L-histidyl-[protein] + diphosphate. The catalysed reaction is L-seryl-[protein] + UTP = O-(5'-uridylyl)-L-seryl-[protein] + diphosphate. It catalyses the reaction L-tyrosyl-[protein] + UTP = O-(5'-uridylyl)-L-tyrosyl-[protein] + diphosphate. In terms of biological role, nucleotidyltransferase involved in the post-translational modification of proteins. It can catalyze the addition of adenosine monophosphate (AMP) or uridine monophosphate (UMP) to a protein, resulting in modifications known as AMPylation and UMPylation. This Shewanella putrefaciens (strain CN-32 / ATCC BAA-453) protein is Protein nucleotidyltransferase YdiU.